The following is a 75-amino-acid chain: Small ribosomal subunit protein bS18 (75 aa).

It belongs to the bacterial ribosomal protein bS18 family. In terms of assembly, part of the 30S ribosomal subunit. Forms a tight heterodimer with protein bS6.

Functionally, binds as a heterodimer with protein bS6 to the central domain of the 16S rRNA, where it helps stabilize the platform of the 30S subunit. In Cellvibrio japonicus (strain Ueda107) (Pseudomonas fluorescens subsp. cellulosa), this protein is Small ribosomal subunit protein bS18.